We begin with the raw amino-acid sequence, 725 residues long: Catalase-peroxidase 1 (725 aa).

Positions 96-224 (WHSAGSYRLA…LAAVQMGLIY (129 aa)) form a cross-link, tryptophyl-tyrosyl-methioninium (Trp-Tyr) (with M-250). His97 serves as the catalytic Proton acceptor. Positions 224 to 250 (YVNPEGVDGNPDPLRTAKDVRETFKRM) form a cross-link, tryptophyl-tyrosyl-methioninium (Tyr-Met) (with W-96). His265 serves as a coordination point for heme b.

It belongs to the peroxidase family. Peroxidase/catalase subfamily. In terms of assembly, homodimer or homotetramer. Heme b is required as a cofactor. Formation of the three residue Trp-Tyr-Met cross-link is important for the catalase, but not the peroxidase activity of the enzyme.

The catalysed reaction is H2O2 + AH2 = A + 2 H2O. The enzyme catalyses 2 H2O2 = O2 + 2 H2O. Functionally, bifunctional enzyme with both catalase and broad-spectrum peroxidase activity. The sequence is that of Catalase-peroxidase 1 from Idiomarina loihiensis (strain ATCC BAA-735 / DSM 15497 / L2-TR).